A 325-amino-acid chain; its full sequence is Thiamine-monophosphate kinase (325 aa).

Mg(2+) is bound by residues aspartate 30, serine 45, threonine 46, and aspartate 47. Position 54 (histidine 54) interacts with substrate. Mg(2+)-binding residues include aspartate 75 and aspartate 122. ATP-binding positions include 121–122 (GD) and arginine 146. Residue aspartate 212 coordinates Mg(2+). Residue serine 214 participates in ATP binding. Residue aspartate 215 coordinates Mg(2+). 2 residues coordinate substrate: glutamate 263 and tyrosine 319.

The protein belongs to the thiamine-monophosphate kinase family.

It carries out the reaction thiamine phosphate + ATP = thiamine diphosphate + ADP. Its pathway is cofactor biosynthesis; thiamine diphosphate biosynthesis; thiamine diphosphate from thiamine phosphate: step 1/1. Its activity is regulated as follows. Is markedly activated by the monovalent cations K(+), NH(4)(+), and Rb(+). Is significantly inhibited by ADP, AMP, p-chloromercuribenzoate, N-ethylmaleimide, pyrophosphate, and EDTA. Its function is as follows. Catalyzes the ATP-dependent phosphorylation of thiamine-monophosphate (TMP) to form thiamine-pyrophosphate (TPP), the active form of vitamin B1. Cannot use thiamine as substrate. Is highly specific for ATP as phosphate donor. This Escherichia coli (strain K12) protein is Thiamine-monophosphate kinase (thiL).